Consider the following 524-residue polypeptide: Adhesion G-protein coupled receptor G5 (524 aa).

The N-terminal stretch at Met1–Thr23 is a signal peptide. At Leu24 to Tyr246 the chain is on the extracellular side. Asn58, Asn65, Asn96, Asn143, Asn169, and Asn175 each carry an N-linked (GlcNAc...) asparagine glycan. Residues Gln74–Pro235 form the GAIN-B domain. Intrachain disulfides connect Cys185-Cys217 and Cys205-Cys219. Residues Cys185–Pro235 form a GPS region. The tract at residues Tyr224–Ser232 is stachel. A helical transmembrane segment spans residues Ile247–Ala267. Residues Gln268–Asn284 are Cytoplasmic-facing. A helical transmembrane segment spans residues Gly285–Met305. The Extracellular segment spans residues Pro306–Tyr319. The cysteines at positions 310 and 400 are disulfide-linked. The helical transmembrane segment at Ala320–Gly340 threads the bilayer. At Arg341–Leu351 the chain is on the cytoplasmic side. A helical membrane pass occupies residues Leu352–Ile372. Over Lys373 to Met413 the chain is Extracellular. Asn390 and Asn396 each carry an N-linked (GlcNAc...) asparagine glycan. Residues Gly414–Leu434 form a helical membrane-spanning segment. The Cytoplasmic segment spans residues Cys435–Ala453. The helical transmembrane segment at Met454 to Phe476 threads the bilayer. The Extracellular portion of the chain corresponds to Leu477 to Gln480. A helical transmembrane segment spans residues Leu481–Cys500. Residues Ser501–His524 are Cytoplasmic-facing.

The protein belongs to the G-protein coupled receptor 2 family. Adhesion G-protein coupled receptor (ADGR) subfamily. As to quaternary structure, heterodimer of 2 chains generated by proteolytic processing; the large extracellular N-terminal fragment and the membrane-bound C-terminal fragment predominantly remain associated and non-covalently linked. Post-translationally, autoproteolytically processed at the GPS region of the GAIN-B domain; this cleavage modulates receptor activity. Expressed at least in kidney, heart, brain and spleen. In terms of tissue distribution, isoform 1 is predominant in spleen. In the kidney, both isoform 1 and isoform 2 are expressed at similar levels. As to expression, isoform 2 is the major form in heart and brain. In the kidney, both isoform 1 and isoform 2 are expressed at similar levels.

It is found in the cell membrane. With respect to regulation, forms a heterodimer of 2 chains generated by proteolytic processing that remain associated through non-covalent interactions mediated by the GAIN-B domain. In the inactivated receptor, the Stachel sequence (also named stalk) is embedded in the GAIN-B domain, where it adopts a beta-strand conformation. On activation, the Stachel moves into the 7 transmembrane region and adopts a twisted hook-shaped configuration that forms contacts within the receptor, leading to coupling of a G-alpha protein, which activates signaling. The cleaved GAIN-B and N-terminal domains can then dissociate from the rest of the receptor. Its function is as follows. Orphan adhesion G-protein coupled receptor (aGPCR). Ligand binding causes a conformation change that triggers signaling via guanine nucleotide-binding proteins (G proteins) and modulates the activity of downstream effectors, such as adenylate cyclase. ADGRG5 is specifically coupled to G(s) G proteins and mediates activation of adenylate cyclase activity. Functionally, isoform 1, but not isoform 2, is constitutively active, as evidenced by elevated basal cAMP levels, and responds to mechanical activation (shaking). The chain is Adhesion G-protein coupled receptor G5 from Mus musculus (Mouse).